The chain runs to 491 residues: Glutamyl-tRNA(Gln) amidotransferase subunit A (491 aa).

Residues lysine 79 and serine 154 each act as charge relay system in the active site. Serine 178 acts as the Acyl-ester intermediate in catalysis.

The protein belongs to the amidase family. GatA subfamily. In terms of assembly, heterotrimer of A, B and C subunits.

It carries out the reaction L-glutamyl-tRNA(Gln) + L-glutamine + ATP + H2O = L-glutaminyl-tRNA(Gln) + L-glutamate + ADP + phosphate + H(+). In terms of biological role, allows the formation of correctly charged Gln-tRNA(Gln) through the transamidation of misacylated Glu-tRNA(Gln) in organisms which lack glutaminyl-tRNA synthetase. The reaction takes place in the presence of glutamine and ATP through an activated gamma-phospho-Glu-tRNA(Gln). This chain is Glutamyl-tRNA(Gln) amidotransferase subunit A, found in Natranaerobius thermophilus (strain ATCC BAA-1301 / DSM 18059 / JW/NM-WN-LF).